Here is a 292-residue protein sequence, read N- to C-terminus: NADH-cytochrome b5 reductase 1 (292 aa).

The helical transmembrane segment at 12-32 (ALLVVGTAIFAVLVGAKFLGG) threads the bilayer. Positions 43–148 (TEFQNFVLKE…RGPKGAMVYT (106 aa)) constitute an FAD-binding FR-type domain. FAD contacts are provided by residues 128 to 143 (TTLK…GPKG) and 154 to 191 (HIGM…QVDL).

It belongs to the flavoprotein pyridine nucleotide cytochrome reductase family. Monomer. Component of the 2-(3-amino-3-carboxypropyl)histidine synthase complex composed of dph1, dph2, dph3 and a NADH-dependent reductase, predominantly cbr1. Requires FAD as cofactor.

The protein localises to the mitochondrion outer membrane. The enzyme catalyses 2 Fe(III)-[cytochrome b5] + NADH = 2 Fe(II)-[cytochrome b5] + NAD(+) + H(+). The catalysed reaction is 2 Fe(3+)-[Dph3] + NADH = 2 Fe(2+)-[Dph3] + NAD(+) + H(+). The protein operates within protein modification; peptidyl-diphthamide biosynthesis. Functionally, NADH-dependent reductase for dph3 and cytochrome b5. Required for the first step of diphthamide biosynthesis, a post-translational modification of histidine which occurs in elongation factor 2. Dph1 and dph2 transfer a 3-amino-3-carboxypropyl (ACP) group from S-adenosyl-L-methionine (SAM) to a histidine residue, the reaction is assisted by a reduction system comprising dph3 and a NADH-dependent reductase, predominantly cbr1. By reducing dph3, also involved in the formation of the tRNA wobble base modification mcm5s 2U (5-methoxycarbonylmethyl-2-thiouridine), mediated by the elongator complex. The cytochrome b5/NADH cytochrome b5 reductase electron transfer system supports the catalytic activity of several sterol biosynthetic enzymes. In Aspergillus oryzae (strain ATCC 42149 / RIB 40) (Yellow koji mold), this protein is NADH-cytochrome b5 reductase 1 (cbr1).